Consider the following 284-residue polypeptide: Methylglyoxal reductase YeaE (284 aa).

The protein belongs to the aldo/keto reductase family.

The catalysed reaction is hydroxyacetone + NADP(+) = methylglyoxal + NADPH + H(+). It catalyses the reaction a primary alcohol + NADP(+) = an aldehyde + NADPH + H(+). Aldo-keto reductase that contributes to cellular methylglyoxal detoxification by catalyzing the NADPH-dependent conversion of methylglyoxal to acetol. It also exhibits activity with glyoxal and probably plays a significant role in detoxification of glyoxal in vivo. Can also use aromatic aldehydes such as 4-nitrobenzaldehyde, 3-nitrobenzaldehyde and benzaldehyde, and phenylglyoxal. The chain is Methylglyoxal reductase YeaE (yeaE) from Escherichia coli (strain K12).